A 124-amino-acid chain; its full sequence is Small ribosomal subunit protein uS13 (124 aa).

The disordered stretch occupies residues Lys-94–Arg-124.

Belongs to the universal ribosomal protein uS13 family. As to quaternary structure, part of the 30S ribosomal subunit. Forms a loose heterodimer with protein S19. Forms two bridges to the 50S subunit in the 70S ribosome.

Functionally, located at the top of the head of the 30S subunit, it contacts several helices of the 16S rRNA. In the 70S ribosome it contacts the 23S rRNA (bridge B1a) and protein L5 of the 50S subunit (bridge B1b), connecting the 2 subunits; these bridges are implicated in subunit movement. Contacts the tRNAs in the A and P-sites. In Pseudarthrobacter chlorophenolicus (strain ATCC 700700 / DSM 12829 / CIP 107037 / JCM 12360 / KCTC 9906 / NCIMB 13794 / A6) (Arthrobacter chlorophenolicus), this protein is Small ribosomal subunit protein uS13.